Consider the following 526-residue polypeptide: ATP synthase subunit alpha (526 aa).

An ATP-binding site is contributed by 174-181 (GDRKTGKT). Residues 505–520 (FEPARSEVKVETRPQE) are compositionally biased toward basic and acidic residues. The segment at 505–526 (FEPARSEVKVETRPQEEEGEEG) is disordered.

It belongs to the ATPase alpha/beta chains family. F-type ATPases have 2 components, CF(1) - the catalytic core - and CF(0) - the membrane proton channel. CF(1) has five subunits: alpha(3), beta(3), gamma(1), delta(1), epsilon(1). CF(0) has three main subunits: a(1), b(2) and c(9-12). The alpha and beta chains form an alternating ring which encloses part of the gamma chain. CF(1) is attached to CF(0) by a central stalk formed by the gamma and epsilon chains, while a peripheral stalk is formed by the delta and b chains.

Its subcellular location is the cell membrane. It catalyses the reaction ATP + H2O + 4 H(+)(in) = ADP + phosphate + 5 H(+)(out). Its function is as follows. Produces ATP from ADP in the presence of a proton gradient across the membrane. The alpha chain is a regulatory subunit. The sequence is that of ATP synthase subunit alpha from Rubrobacter xylanophilus (strain DSM 9941 / JCM 11954 / NBRC 16129 / PRD-1).